The sequence spans 624 residues: DNA mismatch repair protein MutL (624 aa).

Positions 355–377 are disordered; that stretch reads EESAPERKLPEKTPEPSYSPMKL. Residues 358–368 are compositionally biased toward basic and acidic residues; sequence APERKLPEKTP.

This sequence belongs to the DNA mismatch repair MutL/HexB family.

Its function is as follows. This protein is involved in the repair of mismatches in DNA. It is required for dam-dependent methyl-directed DNA mismatch repair. May act as a 'molecular matchmaker', a protein that promotes the formation of a stable complex between two or more DNA-binding proteins in an ATP-dependent manner without itself being part of a final effector complex. The protein is DNA mismatch repair protein MutL of Bacillus velezensis (strain DSM 23117 / BGSC 10A6 / LMG 26770 / FZB42) (Bacillus amyloliquefaciens subsp. plantarum).